Reading from the N-terminus, the 187-residue chain is Elongation factor P (187 aa).

Belongs to the elongation factor P family.

It is found in the cytoplasm. It participates in protein biosynthesis; polypeptide chain elongation. Its function is as follows. Involved in peptide bond synthesis. Stimulates efficient translation and peptide-bond synthesis on native or reconstituted 70S ribosomes in vitro. Probably functions indirectly by altering the affinity of the ribosome for aminoacyl-tRNA, thus increasing their reactivity as acceptors for peptidyl transferase. The chain is Elongation factor P (efp) from Helicobacter pylori (strain J99 / ATCC 700824) (Campylobacter pylori J99).